Consider the following 311-residue polypeptide: Methionyl-tRNA formyltransferase (311 aa).

S110–P113 provides a ligand contact to (6S)-5,6,7,8-tetrahydrofolate.

The protein belongs to the Fmt family.

The catalysed reaction is L-methionyl-tRNA(fMet) + (6R)-10-formyltetrahydrofolate = N-formyl-L-methionyl-tRNA(fMet) + (6S)-5,6,7,8-tetrahydrofolate + H(+). Its function is as follows. Attaches a formyl group to the free amino group of methionyl-tRNA(fMet). The formyl group appears to play a dual role in the initiator identity of N-formylmethionyl-tRNA by promoting its recognition by IF2 and preventing the misappropriation of this tRNA by the elongation apparatus. The polypeptide is Methionyl-tRNA formyltransferase (Streptococcus pneumoniae (strain Taiwan19F-14)).